Consider the following 201-residue polypeptide: MQAFTAHTGLAVAIDSANVDTDQIIPKQFLSKVTRDGFGVHLFHDWRYLDDAGDKPNPDFELNQPRYKGASILLAQENFGCGSSREHAPWALADFGFRVIIAPTFADIFYGNSINNGLLPVKLTSVQVQQLMDEVAAKEGAQITVDLQALTVTSPSGSVFDFTIVESARHKLLNGLDAIGLTLSFEQQISDYETHIPAWFA.

It belongs to the LeuD family. LeuD type 1 subfamily. As to quaternary structure, heterodimer of LeuC and LeuD.

It carries out the reaction (2R,3S)-3-isopropylmalate = (2S)-2-isopropylmalate. It participates in amino-acid biosynthesis; L-leucine biosynthesis; L-leucine from 3-methyl-2-oxobutanoate: step 2/4. Its function is as follows. Catalyzes the isomerization between 2-isopropylmalate and 3-isopropylmalate, via the formation of 2-isopropylmaleate. In Shewanella frigidimarina (strain NCIMB 400), this protein is 3-isopropylmalate dehydratase small subunit.